A 363-amino-acid polypeptide reads, in one-letter code: Probable cinnamyl alcohol dehydrogenase 6 (363 aa).

Zn(2+) is bound at residue Cys-51. Ser-53 serves as a coordination point for NADP(+). Zn(2+)-binding residues include His-73, Glu-74, Cys-104, Cys-107, Cys-110, Cys-118, and Cys-167. NADP(+)-binding positions include Ser-171, 192–197, 215–220, Thr-255, Gly-279, and 302–304; these read GLGGLG, SSTTGK, and SGI.

Belongs to the zinc-containing alcohol dehydrogenase family. In terms of assembly, homodimer. Requires Zn(2+) as cofactor. As to expression, expressed in the primary and lateral roots, and root caps. Expressed in the hypocotyl, cotyledon veins and hydathodes. In stems, expressed in the vascular cambium, interfascicular cambium and developing xylem. Expressed in the style, anthers, stamen filaments, vascular tissues of sepals, stigmatic regions in flowers, and abscission and style regions of siliques.

The enzyme catalyses (E)-cinnamyl alcohol + NADP(+) = (E)-cinnamaldehyde + NADPH + H(+). It catalyses the reaction (E)-coniferol + NADP(+) = (E)-coniferaldehyde + NADPH + H(+). The catalysed reaction is (E)-sinapyl alcohol + NADP(+) = (E)-sinapaldehyde + NADPH + H(+). It carries out the reaction (E)-4-coumaroyl alcohol + NADP(+) = (E)-4-coumaraldehyde + NADPH + H(+). The enzyme catalyses (E)-caffeyl alcohol + NADP(+) = (E)-caffeyl aldehyde + NADPH + H(+). The protein operates within aromatic compound metabolism; phenylpropanoid biosynthesis. Its function is as follows. Involved in lignin biosynthesis. Catalyzes the final step specific for the production of lignin monomers. Catalyzes the NADPH-dependent reduction of coniferaldehyde, 5-hydroxyconiferaldehyde, sinapaldehyde, 4-coumaraldehyde and caffeyl aldehyde to their respective alcohols. The sequence is that of Probable cinnamyl alcohol dehydrogenase 6 (CAD6) from Arabidopsis thaliana (Mouse-ear cress).